The primary structure comprises 103 residues: Large ribosomal subunit protein bL21 (103 aa).

The protein belongs to the bacterial ribosomal protein bL21 family. Part of the 50S ribosomal subunit. Contacts protein L20.

In terms of biological role, this protein binds to 23S rRNA in the presence of protein L20. This chain is Large ribosomal subunit protein bL21, found in Shigella sonnei (strain Ss046).